The chain runs to 283 residues: Bifunctional protein FolD (283 aa).

NADP(+)-binding positions include 165 to 167 (GRS) and S190.

The protein belongs to the tetrahydrofolate dehydrogenase/cyclohydrolase family. Homodimer.

It carries out the reaction (6R)-5,10-methylene-5,6,7,8-tetrahydrofolate + NADP(+) = (6R)-5,10-methenyltetrahydrofolate + NADPH. The catalysed reaction is (6R)-5,10-methenyltetrahydrofolate + H2O = (6R)-10-formyltetrahydrofolate + H(+). The protein operates within one-carbon metabolism; tetrahydrofolate interconversion. Functionally, catalyzes the oxidation of 5,10-methylenetetrahydrofolate to 5,10-methenyltetrahydrofolate and then the hydrolysis of 5,10-methenyltetrahydrofolate to 10-formyltetrahydrofolate. The protein is Bifunctional protein FolD of Methylibium petroleiphilum (strain ATCC BAA-1232 / LMG 22953 / PM1).